Here is a 396-residue protein sequence, read N- to C-terminus: Apurinic-apyrimidinic endonuclease (396 aa).

Residues 31–41 (KGRGKIQKHIQ) are compositionally biased toward basic residues. A disordered region spans residues 31–100 (KGRGKIQKHI…TSGETIAQKK (70 aa)). Over residues 55–70 (NQSPGTTVEETLTEEN) the composition is skewed to polar residues. A compositionally biased stretch (basic and acidic residues) spans 72-85 (STDKEETSKLENKP). The Zn(2+) site is built by His185, His225, Glu261, Asp295, His298, His332, Asp345, His347, and Glu377.

Belongs to the AP endonuclease 2 family. It depends on Zn(2+) as a cofactor.

The protein resides in the nucleus. The sequence is that of Apurinic-apyrimidinic endonuclease (apn-1) from Caenorhabditis elegans.